We begin with the raw amino-acid sequence, 435 residues long: T-box transcription factor T (435 aa).

The segment at residues 51–219 is a DNA-binding region (T-box); sequence LWLRFKELTN…YNPFAKAFLD (169 aa). The tract at residues 279-308 is disordered; sequence YPTLRSHRSSPYPSPYAHRNNSPTYSDNSP. The span at 297–308 shows a compositional bias: polar residues; the sequence is RNNSPTYSDNSP.

As to quaternary structure, monomer. In terms of tissue distribution, detected in testis, but not in other, normal tissues. Detected in lung tumors (at protein level).

The protein resides in the nucleus. Its function is as follows. Involved in the transcriptional regulation of genes required for mesoderm formation and differentiation. Binds to a palindromic T site 5'-TTCACACCTAGGTGTGAA-3' DNA sequence and activates gene transcription when bound to such a site. The polypeptide is T-box transcription factor T (Homo sapiens (Human)).